The sequence spans 372 residues: MSNKDIRVVVGMSGGVDSSVTAHVLKEQGYDVIGIFMKNWDDTDENGVCTATEDYNDVIEVCNQIGIPYYAVNFEKEYWDKVFTYFLDEYKKGRTPNPDVMCNKEIKFKAFLDHAMNLGADYVATGHYARIHRHEDGHVEMLRGVDNNKDQTYFLNQLSQQQLSKVMFPIGDIEKSEVRRIAEEQGLVTAKKKDSTGICFIGEKNFKTFLSQYLPAQPGDMITLDGKKMGKHSGLMYYTIGQRHGLGIGGDGDPWFVVGKNLKDNVLYVEQGFHHDALYSDYLIASDYSFVNPEDNDLDQGFECTAKFRYRQKDTKVFVKRENDHALRVTFAEPVRAITPGQAVVFYQGDVCLGGAIIDDVFKNEGQLNYVV.

Residues Gly11–Ser18 and Met37 each bind ATP. Residues Asn97–Asp99 form an interaction with target base in tRNA region. The active-site Nucleophile is the Cys102. Cys102 and Cys199 form a disulfide bridge. ATP is bound at residue Gly126. The tract at residues Lys149–Gln151 is interaction with tRNA. Cys199 functions as the Cysteine persulfide intermediate in the catalytic mechanism. The tract at residues Arg309–Tyr310 is interaction with tRNA.

The protein belongs to the MnmA/TRMU family.

Its subcellular location is the cytoplasm. It carries out the reaction S-sulfanyl-L-cysteinyl-[protein] + uridine(34) in tRNA + AH2 + ATP = 2-thiouridine(34) in tRNA + L-cysteinyl-[protein] + A + AMP + diphosphate + H(+). Its function is as follows. Catalyzes the 2-thiolation of uridine at the wobble position (U34) of tRNA, leading to the formation of s(2)U34. In Staphylococcus aureus (strain bovine RF122 / ET3-1), this protein is tRNA-specific 2-thiouridylase MnmA.